A 262-amino-acid chain; its full sequence is LOB domain-containing protein 18 (262 aa).

The LOB domain maps to 36 to 138 (GPCGACKFLR…AEVSYLQAHL (103 aa)). Residues 223-262 (VGLGGENSHDLQALAHELLHRQGSPPPAATDHSPSRTMSR) form a disordered region.

The protein belongs to the LOB domain-containing protein family. Homodimer and heterodimer with LBD16. Interacts with GIP1. As to expression, expressed in roots, stems, leaves and flowers. Expressed in vascular tissues of hypocotyls, leaves, roots, developing floral organs and siliques.

The protein resides in the nucleus. Functionally, involved in the positive regulation of tracheary element (TE) differentiation. Involved in a positive feedback loop that maintains or promotes NAC030/VND7 expression that regulates TE differentiation-related genes. Functions in the initiation and emergence of lateral roots, in conjunction with LBD16, downstream of ARF7 and ARF19. Transcriptional activator that directly regulates EXPA14, a gene encoding a cell wall-loosening factor that promotes lateral root emergence. Activates EXPA14 by directly binding to a specific region of its promoter. Transcriptional activator that directly regulates EXPA17, a gene encoding a cell wall-loosening factor that promotes lateral root emergence. Acts downstream of the auxin influx carriers AUX1 and LAX1 in the regulation of lateral root initiation and development. The chain is LOB domain-containing protein 18 (LBD18) from Arabidopsis thaliana (Mouse-ear cress).